The following is a 70-amino-acid chain: Protein SlyX homolog (70 aa).

It belongs to the SlyX family.

The polypeptide is Protein SlyX homolog (Shewanella baltica (strain OS155 / ATCC BAA-1091)).